Reading from the N-terminus, the 193-residue chain is Peptidyl-tRNA hydrolase (193 aa).

H17 contacts tRNA. H22 (proton acceptor) is an active-site residue. F68, N70, and N116 together coordinate tRNA.

Belongs to the PTH family. As to quaternary structure, monomer.

The protein localises to the cytoplasm. It carries out the reaction an N-acyl-L-alpha-aminoacyl-tRNA + H2O = an N-acyl-L-amino acid + a tRNA + H(+). Hydrolyzes ribosome-free peptidyl-tRNAs (with 1 or more amino acids incorporated), which drop off the ribosome during protein synthesis, or as a result of ribosome stalling. Functionally, catalyzes the release of premature peptidyl moieties from peptidyl-tRNA molecules trapped in stalled 50S ribosomal subunits, and thus maintains levels of free tRNAs and 50S ribosomes. The protein is Peptidyl-tRNA hydrolase of Xanthomonas euvesicatoria pv. vesicatoria (strain 85-10) (Xanthomonas campestris pv. vesicatoria).